A 159-amino-acid polypeptide reads, in one-letter code: Ribosomal RNA large subunit methyltransferase H (159 aa).

Residues L76 and G108 each contribute to the S-adenosyl-L-methionine site.

The protein belongs to the RNA methyltransferase RlmH family. In terms of assembly, homodimer.

It is found in the cytoplasm. It catalyses the reaction pseudouridine(1915) in 23S rRNA + S-adenosyl-L-methionine = N(3)-methylpseudouridine(1915) in 23S rRNA + S-adenosyl-L-homocysteine + H(+). In terms of biological role, specifically methylates the pseudouridine at position 1915 (m3Psi1915) in 23S rRNA. In Pediococcus pentosaceus (strain ATCC 25745 / CCUG 21536 / LMG 10740 / 183-1w), this protein is Ribosomal RNA large subunit methyltransferase H.